A 173-amino-acid polypeptide reads, in one-letter code: Protein GrpE (173 aa).

Over residues 1–28 (MTEEEKTKSEAEEIEQNNKEEEQEKSVE) the composition is skewed to basic and acidic residues. The tract at residues 1 to 30 (MTEEEKTKSEAEEIEQNNKEEEQEKSVEEL) is disordered.

It belongs to the GrpE family. In terms of assembly, homodimer.

It localises to the cytoplasm. Functionally, participates actively in the response to hyperosmotic and heat shock by preventing the aggregation of stress-denatured proteins, in association with DnaK and GrpE. It is the nucleotide exchange factor for DnaK and may function as a thermosensor. Unfolded proteins bind initially to DnaJ; upon interaction with the DnaJ-bound protein, DnaK hydrolyzes its bound ATP, resulting in the formation of a stable complex. GrpE releases ADP from DnaK; ATP binding to DnaK triggers the release of the substrate protein, thus completing the reaction cycle. Several rounds of ATP-dependent interactions between DnaJ, DnaK and GrpE are required for fully efficient folding. The polypeptide is Protein GrpE (Methanosphaera stadtmanae (strain ATCC 43021 / DSM 3091 / JCM 11832 / MCB-3)).